A 77-amino-acid chain; its full sequence is Ras-related C3 botulinum toxin substrate 1 (77 aa).

A GTP-binding site is contributed by 22–24 (KLD). A Glycyl lysine isopeptide (Lys-Gly) (interchain with G-Cter in ubiquitin) cross-link involves residue Lys-53. 65–66 (AL) contacts GTP.

This sequence belongs to the small GTPase superfamily. Rho family. In terms of assembly, interacts with NISCH. Interacts with PIP5K1A. Interacts with the GTP-bound form of RAB7A. Interacts with SRGAP2. Interacts with CYFIP1/SRA-1. Interacts with PLXNB3. Interacts with ARHGDIA; the interaction is induced by SEMA5A, mediated through PLXNB3 and inactivates and stabilizes RAC1. Interacts (GTP-bound form preferentially) with PKN2 (via the REM repeats); the interaction stimulates autophosphorylation and phosphorylation of PKN2. Interacts with the GEF proteins PREX1, RASGRF2, FARP1, FARP2, DOCK1, DOCK2 and DOCK7, which promote the exchange between GDP and GTP, and therefore activate it. Interacts with PARD6A, PARD6B and PARD6G in a GTP-dependent manner. Part of a quaternary complex containing PARD3, some PARD6 protein (PARD6A, PARD6B or PARD6G) and some atypical PKC protein (PRKCI or PRKCZ), which plays a central role in epithelial cell polarization. Found in a trimeric complex composed of DOCK1 and ELMO1, which plays a central role in phagocytosis of apoptotic cells. Interacts with RALBP1 via its effector domain. Interacts with PLXNB1. Part of a complex with MAP2K3, MAP3K3, CCM2 and DEF6. Interacts with BAIAP2, BAIAP2L1 and DEF6. Interacts with Y.pseudotuberculosis YPKA and PLCB2. Interacts with NOXA1. Interacts with ARHGEF2. Interacts with TBC1D2. Interacts with UNKL. Interacts with USP6. Interacts with SPATA13. Interacts with ARHGEF16; mediates activation of RAC1 by EPHA2. Interacts with ITGB4. Interacts with S100A8 and calprotectin (S100A8/9). Interacts with PACSIN2. Interacts (when active) with PPP5C (via TPR repeats); activates PPP5C phosphatase activity and translocates PPP5C to the cell membrane. Interacts with RAPH1 (via Ras associating and PH domains). Interacts with MTSS2 (via IMD domain); this interaction may be important to potentiate PDGF-induced RAC1 activation. Interacts with PAK2. Interacts (GTP-bound form) with SH3RF1 and SH3RF3. Found in a complex with SH3RF1, MAPK8IP1/JIP1, MAP3K11/MLK3, MAP2K7/MKK7 and MAPK8/JNK1. Interacts (both active GTP- or inactive GDP-bound forms) with SH3RF2. Interacts (GTP-bound form preferentially) with CYRIB. Interacts with DOCK4 (via DOCKER domain); functions as a guanine nucleotide exchange factor (GEF) for RAC1. Interacts with GARRE1. Interacts with RAP1GDS1. May interact with ARHGAP36. Interacts with DSG3; the interaction is required for DSG3 translocation to cell-cell junctions, organization of cortical F-actin bundles and actin anchoring at cell-cell junctions. Component of the phagocyte NADPH oxidase complex composed of an obligatory core heterodimer formed by the membrane proteins CYBA and CYBB and the cytosolic regulatory subunits NCF1/p47-phox, NCF2/p67-phox, NCF4/p40-phox and the small GTPase RAC1 or RAC2. Interacts with NCF2. In terms of processing, the N-terminus is blocked. GTP-bound active form is ubiquitinated by HACE1, leading to its degradation by the proteasome.

The protein resides in the cytoplasm. The protein localises to the membrane. It is found in the melanosome. Its subcellular location is the cell projection. It localises to the lamellipodium. The protein resides in the dendrite. The protein localises to the synapse. It is found in the nucleus. It catalyses the reaction GTP + H2O = GDP + phosphate + H(+). Regulated by guanine nucleotide exchange factors (GEFs) which promote the exchange of bound GDP for free GTP, GTPase activating proteins (GAPs) which increase the GTP hydrolysis activity, and GDP dissociation inhibitors which inhibit the dissociation of the nucleotide from the GTPase. GTP hydrolysis is stimulated by ARHGAP30. Functionally, plasma membrane-associated small GTPase which cycles between active GTP-bound and inactive GDP-bound states. In its active state, binds to a variety of effector proteins to regulate cellular responses such as secretory processes, phagocytosis of apoptotic cells, epithelial cell polarization, neurons adhesion, migration and differentiation, and growth-factor induced formation of membrane ruffles. Rac1 p21/rho GDI heterodimer is the active component of the cytosolic factor sigma 1, which is involved in stimulation of the NADPH oxidase activity in macrophages. Essential for the SPATA13-mediated regulation of cell migration and adhesion assembly and disassembly. Stimulates PKN2 kinase activity. In concert with RAB7A, plays a role in regulating the formation of RBs (ruffled borders) in osteoclasts. In podocytes, promotes nuclear shuttling of NR3C2; this modulation is required for a proper kidney functioning. Required for atypical chemokine receptor ACKR2-induced LIMK1-PAK1-dependent phosphorylation of cofilin (CFL1) and for up-regulation of ACKR2 from endosomal compartment to cell membrane, increasing its efficiency in chemokine uptake and degradation. In neurons, is involved in dendritic spine formation and synaptic plasticity. In hippocampal neurons, involved in spine morphogenesis and synapse formation, through local activation at synapses by guanine nucleotide exchange factors (GEFs), such as ARHGEF6/ARHGEF7/PIX. In synapses, seems to mediate the regulation of F-actin cluster formation performed by SHANK3. In neurons, plays a crucial role in regulating GABA(A) receptor synaptic stability and hence GABAergic inhibitory synaptic transmission through its role in PAK1 activation and eventually F-actin stabilization. Required for DSG3 translocation to cell-cell junctions, DSG3-mediated organization of cortical F-actin bundles and anchoring of actin at cell junctions; via interaction with DSG3. Subunit of the phagocyte NADPH oxidase complex that mediates the transfer of electrons from cytosolic NADPH to O2 to produce the superoxide anion (O2(-)). This is Ras-related C3 botulinum toxin substrate 1 from Cavia porcellus (Guinea pig).